A 184-amino-acid polypeptide reads, in one-letter code: MNKNNLIGNYTIALFNNAMVDNIQDKVFEEITSINSIITDNVDIREFLFSPIVNKNDKIKAINSLAKNTKINTIVYNFLLLLIKNFRMTILSDIISVFNKLLCESKNIKIVQVISANKLKPKEQEWIKSHIEKELNQKTEILFDIDSNIIGGIVIKYDSMLQDYSIKGSLDKITKVLKKVNINT.

This sequence belongs to the ATPase delta chain family. F-type ATPases have 2 components, F(1) - the catalytic core - and F(0) - the membrane proton channel. F(1) has five subunits: alpha(3), beta(3), gamma(1), delta(1), epsilon(1). F(0) has three main subunits: a(1), b(2) and c(10-14). The alpha and beta chains form an alternating ring which encloses part of the gamma chain. F(1) is attached to F(0) by a central stalk formed by the gamma and epsilon chains, while a peripheral stalk is formed by the delta and b chains.

It localises to the cell inner membrane. Its function is as follows. F(1)F(0) ATP synthase produces ATP from ADP in the presence of a proton or sodium gradient. F-type ATPases consist of two structural domains, F(1) containing the extramembraneous catalytic core and F(0) containing the membrane proton channel, linked together by a central stalk and a peripheral stalk. During catalysis, ATP synthesis in the catalytic domain of F(1) is coupled via a rotary mechanism of the central stalk subunits to proton translocation. Functionally, this protein is part of the stalk that links CF(0) to CF(1). It either transmits conformational changes from CF(0) to CF(1) or is implicated in proton conduction. This chain is ATP synthase subunit delta, found in Rickettsia canadensis (strain McKiel).